Here is a 989-residue protein sequence, read N- to C-terminus: Voltage-gated delayed rectifier potassium channel KCNH1 (989 aa).

Topologically, residues 1–220 (MTMAGGRRGL…LHYCVFKTTW (220 aa)) are cytoplasmic. Residues 14–94 (QNTFLENIVR…QTFENYEMNS (81 aa)) enclose the PAS domain. The 53-residue stretch at 93-145 (NSFEILMYKKNRTPVWFFVKIAPIRNEQDKVVLFLCTFSDITAFKQPIEDDSC) folds into the PAC domain. Positions 151 to 162 (FARLTRALTSSR) are required for phosphatidylinositol bisphosphate binding. Residues 221–241 (DWIILILTFYTAILVPYNVSF) traverse the membrane as a helical segment. Residues 242-248 (KTRQNNV) are Extracellular-facing. Residues 249-269 (AWLVVDSIVDVIFLVDIVLNF) traverse the membrane as a helical segment. Residues 270 to 290 (HTTFVGPAGEVISDPKLIRMN) lie on the Cytoplasmic side of the membrane. A helical membrane pass occupies residues 291 to 309 (YLKTWFVIDLLSCLPYDVI). The Extracellular portion of the chain corresponds to 310 to 345 (NAFENVDEVSAFMGDPGKIGFADQIPPPLEGRESQG). Residues 346-368 (ISSLFSSLKVVRLLRLGRVARKL) form a helical; Voltage-sensor membrane-spanning segment. Residues 369-377 (DHYIEYGAA) lie on the Cytoplasmic side of the membrane. The helical transmembrane segment at 378–399 (VLVLLVCVFGLAAHWMACIWYS) threads the bilayer. Over 400–448 (IGDYEIFDEDTKTIRNNSWLYQLALDIGTPYQFNGSGSGKWEGGPSKNS) the chain is Extracellular. Residues asparagine 415 and asparagine 433 are each glycosylated (N-linked (GlcNAc...) asparagine). Positions 449 to 470 (VYISSLYFTMTSLTSVGFGNIA) form an intramembrane region, pore-forming. Positions 463-468 (SVGFGN) match the Selectivity filter motif. Residues 471–477 (PSTDIEK) are Extracellular-facing. The helical transmembrane segment at 478-498 (IFAVAIMMIGSLLYATIFGNV) threads the bilayer. Residues 499–989 (TTIFQQMYAN…ESDRDIFGAS (491 aa)) are Cytoplasmic-facing. The calmodulin-binding stretch occupies residues 673 to 770 (KRDALQKVLE…LDDLDVEKGN (98 aa)). An interaction with cyclic nucleotide-binding pocket region spans residues 699–701 (YNL). 2 stretches are compositionally biased toward basic and acidic residues: residues 857–879 (ESME…KTDS) and 887–901 (SDLR…RSPQ). 2 disordered regions span residues 857–905 (ESME…DRSP) and 961–989 (RGSA…FGAS). The CAD (involved in subunit assembly) stretch occupies residues 924–964 (ATVLEVKYELKEDIKALNAKMTSIEKQLSEILRILMSRGSA). Residues 962–979 (GSAQSPQETGEISRPQSP) show a composition bias toward polar residues. Residues serine 974, serine 978, and serine 981 each carry the phosphoserine modification. Over residues 980–989 (ESDRDIFGAS) the composition is skewed to basic and acidic residues.

Belongs to the potassium channel family. H (Eag) (TC 1.A.1.20) subfamily. Kv10.1/KCNH1 sub-subfamily. In terms of assembly, homomultimer. The potassium channel is composed of a homo- or heterotetrameric complex of pore-forming alpha subunits that can associate with modulating beta subunits. Heteromultimer with KCNH5/EAG2. Interacts with ALG10B. Interacts with RABEP1. Interacts (via C-terminus) with CTTN. Interacts (via C-terminal cytoplasmic region) with Ca(2+)-bound calmodulin. In terms of processing, channel activity is regulated via tyrosine phosphorylation/dephosphorylation by SRC and PTPN6. As to expression, detected in brain (at protein level). Highly expressed in olfactory bulb. Detected in brain cortex, hippocampus, brain stem, striatum, thalamus, hypothalamus and spinal cord.

It is found in the cell membrane. Its subcellular location is the nucleus inner membrane. The protein localises to the cell projection. It localises to the dendrite. The protein resides in the axon. It is found in the presynaptic cell membrane. Its subcellular location is the perikaryon. The protein localises to the postsynaptic density membrane. It localises to the early endosome membrane. The catalysed reaction is K(+)(in) = K(+)(out). Channel activity is inhibited by interaction with Ca(2+)-bound calmodulin. Interaction of a single pore-forming alpha subunit with a calmodulin chain is sufficient to promote channel closure. Channel activity is not regulated by cyclic nucleotides. Channel activity is inhibited by binding intracellular phosphatidylinositol-3,5-bisphosphate and phosphatidylinositol-4,5-bisphosphate (PIP2), but is not inhibited by phosphatidylinositol 4-phosphate. Pore-forming (alpha) subunit of a voltage-gated delayed rectifier potassium channel that mediates outward-rectifying potassium currents which, on depolarization, reaches a steady-state level and do not inactivate. The activation kinetics depend on the prepulse potential and external divalent cation concentration. With negative prepulses, the current activation is delayed and slowed down several fold, whereas more positive prepulses speed up activation. The time course of activation is biphasic with a fast and a slowly activating current component. Activates at more positive membrane potentials and exhibit a steeper activation curve. Channel properties are modulated by subunit assembly. Mediates IK(NI) current in myoblasts. Involved in the regulation of cell proliferation and differentiation, in particular adipogenic and osteogenic differentiation in bone marrow-derived mesenchymal stem cells (MSCs). This Mus musculus (Mouse) protein is Voltage-gated delayed rectifier potassium channel KCNH1.